Here is a 497-residue protein sequence, read N- to C-terminus: PHD finger protein 10 (497 aa).

The segment covering 1 to 13 has biased composition (low complexity); sequence MTAAGPGAAPSPG. The disordered stretch occupies residues 1 to 61; it reads MTAAGPGAAP…SSRSCETSSQ (61 aa). Phosphoserine is present on residues serine 11, serine 35, and serine 49. The segment at 88–184 is essential to induce neural progenitor proliferation; sequence MLQEQVSEYL…HYKEYSQMQQ (97 aa). The segment at 88 to 294 is SAY; it reads MLQEQVSEYL…PPLDPELPAL (207 aa). Lysine 240 participates in a covalent cross-link: Glycyl lysine isopeptide (Lys-Gly) (interchain with G-Cter in SUMO2). Serine 269 carries the post-translational modification Phosphoserine. A compositionally biased stretch (low complexity) spans 284–295; the sequence is EPPLDPELPALD. The interval 284-368 is disordered; sequence EPPLDPELPA…RSVLSKSAPG (85 aa). The segment at 291–333 is essential to induce neural progenitor proliferation; the sequence is LPALDSDGDSDDGEDGGGDEKRKNKGTSDSSSGNVSEGDSPPD. 4 positions are modified to phosphoserine: serine 296, serine 300, serine 326, and serine 330. The span at 296–307 shows a compositional bias: acidic residues; sequence SDGDSDDGEDGG. Residues 317–327 are compositionally biased toward polar residues; sequence TSDSSSGNVSE. Positions 337-358 are enriched in basic and acidic residues; it reads DTFHGRQKSKDKMATPRKDGSK. A PHD-type 1; degenerate zinc finger spans residues 378–435; that stretch reads LCGICLKGKESNKKGKAESLIHCSQCDNSGHPSCLDMTMELVSMIKTYPWQCMECKTC. Lysine 384 is covalently cross-linked (Glycyl lysine isopeptide (Lys-Gly) (interchain with G-Cter in SUMO2)). The segment at 437-480 adopts a PHD-type 2; degenerate zinc-finger fold; the sequence is ICGQPHHEEEMMFCDVCDRGYHTFCVGLGAIPSGRWICDCCQRA.

Belongs to the SAYP family. In terms of assembly, component of neural progenitors-specific chromatin remodeling complex (npBAF complex) composed of at least, ARID1A/BAF250A or ARID1B/BAF250B, SMARCD1/BAF60A, SMARCD3/BAF60C, SMARCA2/BRM/BAF190B, SMARCA4/BRG1/BAF190A, SMARCB1/BAF47, SMARCC1/BAF155, SMARCE1/BAF57, SMARCC2/BAF170, PHF10/BAF45A, ACTL6A/BAF53A and actin. Interacts with ACTL6A/BAF53A, SMARCA2/BRM/BAF190B, SMARCA4/BRG1/BAF190A and PBRM1/BAF180. Widely expressed. Expressed selectively in neural stem and progenitor cells (at protein level).

It is found in the nucleus. In terms of biological role, involved in transcription activity regulation by chromatin remodeling. Belongs to the neural progenitors-specific chromatin remodeling complex (npBAF complex) and is required for the proliferation of neural progenitors. During neural development a switch from a stem/progenitor to a post-mitotic chromatin remodeling mechanism occurs as neurons exit the cell cycle and become committed to their adult state. The transition from proliferating neural stem/progenitor cells to post-mitotic neurons requires a switch in subunit composition of the npBAF and nBAF complexes. As neural progenitors exit mitosis and differentiate into neurons, npBAF complexes which contain ACTL6A/BAF53A and PHF10/BAF45A, are exchanged for homologous alternative ACTL6B/BAF53B and DPF1/BAF45B or DPF3/BAF45C subunits in neuron-specific complexes (nBAF). The npBAF complex is essential for the self-renewal/proliferative capacity of the multipotent neural stem cells. The nBAF complex along with CREST plays a role regulating the activity of genes essential for dendrite growth. The chain is PHD finger protein 10 (Phf10) from Mus musculus (Mouse).